The primary structure comprises 328 residues: Phosphate acyltransferase (328 aa).

Belongs to the PlsX family. As to quaternary structure, homodimer. Probably interacts with PlsY.

The protein localises to the cytoplasm. The enzyme catalyses a fatty acyl-[ACP] + phosphate = an acyl phosphate + holo-[ACP]. Its pathway is lipid metabolism; phospholipid metabolism. Catalyzes the reversible formation of acyl-phosphate (acyl-PO(4)) from acyl-[acyl-carrier-protein] (acyl-ACP). This enzyme utilizes acyl-ACP as fatty acyl donor, but not acyl-CoA. This is Phosphate acyltransferase from Mycoplasma pneumoniae (strain ATCC 29342 / M129 / Subtype 1) (Mycoplasmoides pneumoniae).